Here is a 505-residue protein sequence, read N- to C-terminus: MPRTFEEECDFIDRLTDTKFRIKKGFVPNMNVEGRFYVNNSLEQLMFDELKFSCDGQGIGGFLPAVRQIANVASLPGIVGHSIGLPDIHSGYGFSIGNIAAFDVGNPESVISPGGVGFDINCGVRLLRTNLFEENVKPLKEQLTQSLFDHIPVGVGSRGAIPMLASDLVECLEMGMDWTLREGYSWAEDKEHCEEYGRMLQADASKVSLRAKKRGLPQLGTLGAGNHYAEVQVVDEIYDKHAASTMGIDEEGQVVVMLHCGSRGLGHQVATDSLVEMEKAMARDGIVVNDKQLACARINSVEGKNYFSGMAAAANFAWVNRSCITFCVRNAFQKTFGMSADDMDMQVIYDVSHNVAKMEEHMVDGRPRQLCVHRKGATRAFPAHHPLIPVDYQLIGQPVLIGGSMGTCSYVLTGTEQGLVETFGTTCHGAGRALSRAKSRRTITWDSVIDDLKKKEISIRIASPKLIMEEAPESYKNVTDVVDTCDAAGISKKAVKLRPIAVIKG.

Mn(2+) contacts are provided by Asp-119, Cys-122, His-227, His-259, and His-353. Asn-226–Glu-230 is a GMP binding site. GMP is bound by residues His-353–Asn-354, Gly-402–Met-405, Ser-409, His-428–Gly-431, and Lys-504. Catalysis depends on His-428, which acts as the GMP-histidine intermediate.

It belongs to the RtcB family. Catalytic component of the tRNA-splicing ligase complex. Mn(2+) is required as a cofactor.

The protein resides in the nucleus. It is found in the cytoplasm. The catalysed reaction is a 3'-end 3'-phospho-ribonucleotide-RNA + a 5'-end dephospho-ribonucleoside-RNA + GTP = a ribonucleotidyl-ribonucleotide-RNA + GMP + diphosphate. The enzyme catalyses a 3'-end 2',3'-cyclophospho-ribonucleotide-RNA + a 5'-end dephospho-ribonucleoside-RNA + GTP + H2O = a ribonucleotidyl-ribonucleotide-RNA + GMP + diphosphate + H(+). In terms of biological role, catalytic subunit of the tRNA-splicing ligase complex that acts by directly joining spliced tRNA halves to mature-sized tRNAs. Required for the ligation of mRNAs and specifically, regulates xbp-1 mRNA splicing during the endoplasmic reticulum stress-induced unfolded protein response. Has a neuroprotective role in the age-dependent degeneration of dopamine neurons, which is mediated by xbp-1. This is RNA-splicing ligase RtcB homolog from Caenorhabditis elegans.